We begin with the raw amino-acid sequence, 411 residues long: Potassium channel subfamily K member 3 (411 aa).

At 1-8 the chain is on the cytoplasmic side; it reads MKRQNVRT. A helical transmembrane segment spans residues 9-29; that stretch reads LALIVCTFTYLLVGAAVFDAL. Asn53 carries an N-linked (GlcNAc...) asparagine glycan. An intramembrane region (pore-forming) is located at residues 78-101; sequence WRFAGSFYFAITVITTIGYGHAAP. Residues 108–128 form a helical membrane-spanning segment; it reads VFCMFYALLGIPLTLVMFQSL. Residues 129–158 are Cytoplasmic-facing; the sequence is GERINTFVRYLLHRAKRGLGMRHAEVSMAN. Residues 159 to 179 form a helical membrane-spanning segment; the sequence is MVLIGFVSCISTLCIGAAAFS. The pore-forming intramembrane region spans 184–207; that stretch reads WTFFQAYYYCFITLTTIGFGDYVA. A helical membrane pass occupies residues 223–243; sequence FSFVYILTGLTVIGAFLNLVV. The Cytoplasmic segment spans residues 244–411; sequence LRFMTMNAED…RGLMKRRSSV (168 aa).

Belongs to the two pore domain potassium channel (TC 1.A.1.8) family. Homodimer. Heterodimer with KCNK1. Heterodimer with KCNK9. In terms of tissue distribution, strongest expression in heart. Moderate expression in lung and brain. Low levels in liver, kidney and skeletal muscle. Expressed in cerebellar granule cells (at protein level).

Its subcellular location is the cell membrane. The catalysed reaction is K(+)(in) = K(+)(out). The enzyme catalyses Na(+)(in) = Na(+)(out). Inhibited by extracellular acidification, muscarinic signaling, divalent metal cations Zn(2+) and Ba(2+), isoflurane, bupivacaine and phenytoin. Activated by protein kinase A. Ruthenium red resistant. K(+) channel that conducts voltage-dependent outward rectifying currents upon membrane depolarization. Voltage sensing is coupled to K(+) electrochemical gradient in an 'ion flux gating' mode where outward but not inward ion flow opens the gate. Changes ion selectivity and becomes permeable to Na(+) ions in response to extracellular acidification. Protonation of the pH sensor His-98 stabilizes C-type inactivation conformation likely converting the channel from outward K(+)-conducting, to inward Na(+)-conducting to nonconductive state. Homo- and heterodimerizes to form functional channels with distinct regulatory and gating properties. Allows K(+) currents with fast-gating kinetics important for the repolarization and hyperpolarization phases of action potentials. In cerebellar granule cells, heteromeric KCNK3:KCNK9 channel may hyperpolarize the resting membrane potential to limit intrinsic neuronal excitability, but once the action potential threshold is reached, it may support high-frequency action potential firing and increased neuronal excitability. Dispensable for central chemosensory respiration i.e. breathing controlled by brainstem CO2/pH, it rather conducts pH-sensitive currents and controls the firing rate of serotonergic raphe neurons involved in potentiation of the respiratory chemoreflex. Additionally, imparts chemosensitivity to type 1 cells in carotid bodies which respond to a decrease in arterial oxygen pressure or an increase in carbon dioxide pressure or pH to initiate adaptive changes in pulmonary ventilation. In adrenal gland, contributes to the maintenance of a hyperpolarized resting membrane potential of aldosterone-producing cells at zona glomerulosa and limits aldosterone release as part of a regulatory mechanism that controls arterial blood pressure and electrolyte homeostasis. In brown adipocytes, mediates K(+) efflux that counteracts norepinephrine-induced membrane depolarization, limits Ca(2+) efflux and downstream cAMP and PKA signaling, ultimately attenuating lipid oxidation and adaptive thermogenesis. This Rattus norvegicus (Rat) protein is Potassium channel subfamily K member 3.